We begin with the raw amino-acid sequence, 295 residues long: Nucleotide-binding protein BLi03725/BL03417 (295 aa).

An ATP-binding site is contributed by 16 to 23; sequence GMSGAGKT. 67 to 70 lines the GTP pocket; sequence DLRG.

This sequence belongs to the RapZ-like family.

Functionally, displays ATPase and GTPase activities. This Bacillus licheniformis (strain ATCC 14580 / DSM 13 / JCM 2505 / CCUG 7422 / NBRC 12200 / NCIMB 9375 / NCTC 10341 / NRRL NRS-1264 / Gibson 46) protein is Nucleotide-binding protein BLi03725/BL03417.